The chain runs to 258 residues: HTH-type transcriptional repressor GlcR (258 aa).

Residues 3-58 (QEERLVAILDFLKQHNRITTEQICTLLQVSRDTARRDLVKLEEQNAIIRTRGGAIL) enclose the HTH deoR-type domain. A DNA-binding region (H-T-H motif) is located at residues 20–39 (ITTEQICTLLQVSRDTARRD).

Its function is as follows. Plays a role in carbon catabolite repression (CCR). Specifically required for transcriptional repression of the levanase operon by glucose but not by other sugars. This chain is HTH-type transcriptional repressor GlcR (glcR), found in Bacillus subtilis (strain 168).